We begin with the raw amino-acid sequence, 299 residues long: Apolipoprotein E (299 aa).

Residues 1-18 (MKVLCTVLVVTLLAGCRA) form the signal peptide. An 8 X 22 AA approximate tandem repeats region spans residues 74–245 (VLMEDTMKAV…RLEEVREQME (172 aa)). Tandem repeats lie at residues 75–95 (LMEDTMKAVKAYKSELEQELV), 96–117 (PMAEDTKARLSKELQAAQARLG), 118–139 (ADMEEVRNRLALYRNEMQAMLG), 140–161 (QSAEELRARLASHLRKLRKRML), 162–183 (RDAEDLQKRLAVYKDGASEGAE), 184–206 (RGVSAIRERLGSLVEQSRVRAAL), 207–225 (TSQPLQERAQAWGKQLRGR), and 224–242 (GRLEEVRGQAQDRLEEVRE). Position 137 is a methionine sulfoxide (Met137). Position 141 is a phosphoserine (Ser141). Residues 152–162 (HLRKLRKRMLR) form an LDL and other lipoprotein receptors binding region. 156–159 (LRKR) contacts heparin. The interval 205 to 273 (ALTSQPLQER…GWFEPMVEDM (69 aa)) is lipid-binding and lipoprotein association. 219 to 226 (GKQLRGRL) lines the heparin pocket. The tract at residues 261–273 (RLKGWFEPMVEDM) is specificity for association with VLDL.

It belongs to the apolipoprotein A1/A4/E family. Homotetramer. May interact with ABCA1; functionally associated with ABCA1 in the biogenesis of HDLs. May interact with APP/A4 amyloid-beta peptide; the interaction is extremely stable in vitro but its physiological significance is unclear. May interact with MAPT. May interact with MAP2. In the cerebrospinal fluid, interacts with secreted SORL1. Interacts with PMEL; this allows the loading of PMEL luminal fragment on ILVs to induce fibril nucleation. APOE exists as multiple glycosylated and sialylated glycoforms within cells and in plasma. The extent of glycosylation and sialylation are tissue and context specific. Post-translationally, glycated in plasma VLDL. In terms of processing, phosphorylated by FAM20C in the extracellular medium.

The protein localises to the secreted. The protein resides in the extracellular space. It localises to the extracellular matrix. Its subcellular location is the extracellular vesicle. It is found in the endosome. The protein localises to the multivesicular body. APOE is an apolipoprotein, a protein associating with lipid particles, that mainly functions in lipoprotein-mediated lipid transport between organs via the plasma and interstitial fluids. APOE is a core component of plasma lipoproteins and is involved in their production, conversion and clearance. Apolipoproteins are amphipathic molecules that interact both with lipids of the lipoprotein particle core and the aqueous environment of the plasma. As such, APOE associates with chylomicrons, chylomicron remnants, very low density lipoproteins (VLDL) and intermediate density lipoproteins (IDL) but shows a preferential binding to high-density lipoproteins (HDL). It also binds a wide range of cellular receptors including the LDL receptor/LDLR, the LDL receptor-related proteins LRP1, LRP2 and LRP8 and the very low-density lipoprotein receptor/VLDLR that mediate the cellular uptake of the APOE-containing lipoprotein particles. Finally, APOE also has a heparin-binding activity and binds heparan-sulfate proteoglycans on the surface of cells, a property that supports the capture and the receptor-mediated uptake of APOE-containing lipoproteins by cells. A main function of APOE is to mediate lipoprotein clearance through the uptake of chylomicrons, VLDLs, and HDLs by hepatocytes. APOE is also involved in the biosynthesis by the liver of VLDLs as well as their uptake by peripheral tissues ensuring the delivery of triglycerides and energy storage in muscle, heart and adipose tissues. By participating in the lipoprotein-mediated distribution of lipids among tissues, APOE plays a critical role in plasma and tissues lipid homeostasis. APOE is also involved in two steps of reverse cholesterol transport, the HDLs-mediated transport of cholesterol from peripheral tissues to the liver, and thereby plays an important role in cholesterol homeostasis. First, it is functionally associated with ABCA1 in the biogenesis of HDLs in tissues. Second, it is enriched in circulating HDLs and mediates their uptake by hepatocytes. APOE also plays an important role in lipid transport in the central nervous system, regulating neuron survival and sprouting. This Tympanoctomys barrerae (Plains viscacha rat) protein is Apolipoprotein E (Apoe).